We begin with the raw amino-acid sequence, 251 residues long: Uroporphyrinogen-III C-methyltransferase (251 aa).

Residues Pro-17, 93 to 95 (GGD), 123 to 124 (TS), Met-177, and Ala-206 each bind S-adenosyl-L-homocysteine.

It belongs to the precorrin methyltransferase family.

Its subcellular location is the plastid. It is found in the chloroplast. It carries out the reaction uroporphyrinogen III + 2 S-adenosyl-L-methionine = precorrin-2 + 2 S-adenosyl-L-homocysteine + H(+). It functions in the pathway cofactor biosynthesis; adenosylcobalamin biosynthesis; precorrin-2 from uroporphyrinogen III: step 1/1. It participates in porphyrin-containing compound metabolism; siroheme biosynthesis; precorrin-2 from uroporphyrinogen III: step 1/1. Functionally, catalyzes the two successive C-2 and C-7 methylation reactions involved in the conversion of uroporphyrinogen III to precorrin-2 via the intermediate formation of precorrin-1. It is a step in the biosynthesis of both cobalamin (vitamin B12) and siroheme. The polypeptide is Uroporphyrinogen-III C-methyltransferase (cobA) (Cyanidium caldarium (Red alga)).